A 718-amino-acid chain; its full sequence is Polyribonucleotide nucleotidyltransferase (718 aa).

Mg(2+) is bound by residues D506 and D512. One can recognise a KH domain in the interval 572-632 (PKLELFSVDP…EQIKAAKDYI (61 aa)). The region spanning 657-718 (GQEFQGIVKK…NGKISVDLCE (62 aa)) is the S1 motif domain.

The protein belongs to the polyribonucleotide nucleotidyltransferase family. Requires Mg(2+) as cofactor.

Its subcellular location is the cytoplasm. The catalysed reaction is RNA(n+1) + phosphate = RNA(n) + a ribonucleoside 5'-diphosphate. In terms of biological role, involved in mRNA degradation. Catalyzes the phosphorolysis of single-stranded polyribonucleotides processively in the 3'- to 5'-direction. The polypeptide is Polyribonucleotide nucleotidyltransferase (Campylobacter jejuni subsp. doylei (strain ATCC BAA-1458 / RM4099 / 269.97)).